The chain runs to 509 residues: ATP synthase subunit alpha (509 aa).

An ATP-binding site is contributed by 169 to 176 (GDRKTGKT).

Belongs to the ATPase alpha/beta chains family. As to quaternary structure, F-type ATPases have 2 components, CF(1) - the catalytic core - and CF(0) - the membrane proton channel. CF(1) has five subunits: alpha(3), beta(3), gamma(1), delta(1), epsilon(1). CF(0) has three main subunits: a(1), b(2) and c(9-12). The alpha and beta chains form an alternating ring which encloses part of the gamma chain. CF(1) is attached to CF(0) by a central stalk formed by the gamma and epsilon chains, while a peripheral stalk is formed by the delta and b chains.

The protein resides in the cell membrane. It carries out the reaction ATP + H2O + 4 H(+)(in) = ADP + phosphate + 5 H(+)(out). In terms of biological role, produces ATP from ADP in the presence of a proton gradient across the membrane. The alpha chain is a regulatory subunit. This chain is ATP synthase subunit alpha, found in Lacticaseibacillus casei (strain BL23) (Lactobacillus casei).